The following is a 119-amino-acid chain: Large ribosomal subunit protein uL18 (119 aa).

This sequence belongs to the universal ribosomal protein uL18 family. In terms of assembly, part of the 50S ribosomal subunit; part of the 5S rRNA/L5/L18/L25 subcomplex. Contacts the 5S and 23S rRNAs.

Functionally, this is one of the proteins that bind and probably mediate the attachment of the 5S RNA into the large ribosomal subunit, where it forms part of the central protuberance. This chain is Large ribosomal subunit protein uL18, found in Xylella fastidiosa (strain 9a5c).